The chain runs to 187 residues: Glutathione-dependent formaldehyde-activating enzyme (187 aa).

Positions 20-167 constitute a CENP-V/GFA domain; sequence FAGGTLVCKC…LKELGLEPYD (148 aa). Residues cysteine 27, cysteine 29, cysteine 48, cysteine 50, cysteine 53, cysteine 95, and cysteine 98 each coordinate Zn(2+).

Belongs to the Gfa family. It depends on Zn(2+) as a cofactor.

It carries out the reaction S-(hydroxymethyl)glutathione = glutathione + formaldehyde. Its pathway is one-carbon metabolism; formaldehyde degradation; formate from formaldehyde (glutathione route): step 1/3. Catalyzes the condensation of formaldehyde and glutathione to S-hydroxymethylglutathione. This is Glutathione-dependent formaldehyde-activating enzyme from Bradyrhizobium sp. (strain BTAi1 / ATCC BAA-1182).